The chain runs to 92 residues: Bombyxin A-9 (92 aa).

The signal sequence occupies residues 1 to 19; that stretch reads MKLLLAIALMLTTVMWAST. Gln20 is modified (pyrrolidone carboxylic acid). 3 cysteine pairs are disulfide-bonded: Cys29–Cys79, Cys41–Cys92, and Cys78–Cys83. A propeptide spans 50–71 (c peptide like); it reads SDAQFASYGSAWLMPYSEGRDQ.

The protein belongs to the insulin family. As to quaternary structure, heterodimer of a B chain and an A chain linked by two disulfide bonds.

Its subcellular location is the secreted. Its function is as follows. Brain peptide responsible for activation of prothoracic glands to produce ecdysone in insects. This chain is Bombyxin A-9 (BBXA9), found in Bombyx mori (Silk moth).